Consider the following 142-residue polypeptide: Putative nickel-responsive regulator (142 aa).

4 residues coordinate Ni(2+): His-77, His-88, His-90, and Cys-96.

The protein belongs to the transcriptional regulatory CopG/NikR family. Homotetramer. It depends on Ni(2+) as a cofactor.

In terms of biological role, transcriptional regulator. The chain is Putative nickel-responsive regulator from Halobacterium salinarum (strain ATCC 700922 / JCM 11081 / NRC-1) (Halobacterium halobium).